The primary structure comprises 285 residues: Anamorsin homolog 1 (285 aa).

Residues 1–150 (MEATVLLVTD…QKPTWETGSS (150 aa)) are N-terminal SAM-like domain. A linker region spans residues 150–195 (SFSLKKKSVQKQESLPKPGALSVKPEMNVDLEDLIDEESLLSEEDL). [2Fe-2S] cluster is bound by residues Cys206, Cys215, Cys218, and Cys220. The tract at residues 206–220 (CEVSTKRKACKNCTC) is fe-S binding site A. [4Fe-4S] cluster-binding residues include Cys246, Cys249, Cys257, and Cys260. 2 consecutive short sequence motifs (cx2C motif) follow at residues 246 to 249 (CGNC) and 257 to 260 (CSSC). Residues 246 to 260 (CGNCGLGDAFRCSSC) form a fe-S binding site B region.

This sequence belongs to the anamorsin family. Monomer. [2Fe-2S] cluster serves as cofactor. Requires [4Fe-4S] cluster as cofactor.

The protein localises to the cytoplasm. It localises to the mitochondrion intermembrane space. Its function is as follows. Component of the cytosolic iron-sulfur (Fe-S) protein assembly (CIA) machinery. Required for the maturation of extramitochondrial Fe-S proteins. Part of an electron transfer chain functioning in an early step of cytosolic Fe-S biogenesis, facilitating the de novo assembly of a [4Fe-4S] cluster on the cytosolic Fe-S scaffold complex. Electrons are transferred from NADPH via a FAD- and FMN-containing diflavin oxidoreductase. Together with the diflavin oxidoreductase, also required for the assembly of the diferric tyrosyl radical cofactor of ribonucleotide reductase (RNR), probably by providing electrons for reduction during radical cofactor maturation in the catalytic small subunit. The protein is Anamorsin homolog 1 of Picea sitchensis (Sitka spruce).